Consider the following 103-residue polypeptide: MSKQKIRIRLKAFDYKLIDQSAAEIVDTAKRTGAIVKGPVPLPTRMKRFDILRSPHVNKTSRDQLEIRTHQRLMDIVDPTDKTVDALMKLDLPAGVDVEIKLQ.

Belongs to the universal ribosomal protein uS10 family. Part of the 30S ribosomal subunit.

Functionally, involved in the binding of tRNA to the ribosomes. This chain is Small ribosomal subunit protein uS10, found in Verminephrobacter eiseniae (strain EF01-2).